Here is a 349-residue protein sequence, read N- to C-terminus: Protein-glutamate methylesterase/protein-glutamine glutaminase (349 aa).

Positions 5 to 122 constitute a Response regulatory domain; that stretch reads RVLCVDDSAL…REGMLAYSEL (118 aa). The residue at position 56 (Asp56) is a 4-aspartylphosphate. The CheB-type methylesterase domain maps to 152–344; sequence LLSSEKLIAI…QRMLAQISSG (193 aa). Residues Ser164, His190, and Asp286 contribute to the active site.

It belongs to the CheB family. Post-translationally, phosphorylated by CheA. Phosphorylation of the N-terminal regulatory domain activates the methylesterase activity.

It is found in the cytoplasm. It catalyses the reaction [protein]-L-glutamate 5-O-methyl ester + H2O = L-glutamyl-[protein] + methanol + H(+). The catalysed reaction is L-glutaminyl-[protein] + H2O = L-glutamyl-[protein] + NH4(+). Involved in chemotaxis. Part of a chemotaxis signal transduction system that modulates chemotaxis in response to various stimuli. Catalyzes the demethylation of specific methylglutamate residues introduced into the chemoreceptors (methyl-accepting chemotaxis proteins or MCP) by CheR. Also mediates the irreversible deamidation of specific glutamine residues to glutamic acid. This chain is Protein-glutamate methylesterase/protein-glutamine glutaminase, found in Yersinia pseudotuberculosis serotype I (strain IP32953).